The primary structure comprises 435 residues: Cyclin-J-like protein (435 aa).

The Cyclin N-terminal domain maps to 14-191 (DVHCTLREKE…LLEAFSWNLC (178 aa)). Residues 120-142 (SSNSPASAPHPPPTPPQVAETTG) are disordered.

Belongs to the cyclin family. Cyclin J subfamily.

The polypeptide is Cyclin-J-like protein (CCNJL) (Homo sapiens (Human)).